Consider the following 378-residue polypeptide: Putative glycosyltransferase ORF378 (378 aa).

This sequence belongs to the glycosyltransferase group 1 family. Glycosyltransferase 4 subfamily.

This is Putative glycosyltransferase ORF378 from Acidianus sp. F28 (AFV-2).